The primary structure comprises 291 residues: Acetyl-coenzyme A carboxylase carboxyl transferase subunit beta (291 aa).

Residues methionine 1–serine 23 form a disordered region. The region spanning leucine 28 to alanine 291 is the CoA carboxyltransferase N-terminal domain. 4 residues coordinate Zn(2+): cysteine 32, cysteine 35, cysteine 51, and cysteine 54. Residues cysteine 32–cysteine 54 form a C4-type zinc finger.

The protein belongs to the AccD/PCCB family. Acetyl-CoA carboxylase is a heterohexamer composed of biotin carboxyl carrier protein (AccB), biotin carboxylase (AccC) and two subunits each of ACCase subunit alpha (AccA) and ACCase subunit beta (AccD). The cofactor is Zn(2+).

It localises to the cytoplasm. It catalyses the reaction N(6)-carboxybiotinyl-L-lysyl-[protein] + acetyl-CoA = N(6)-biotinyl-L-lysyl-[protein] + malonyl-CoA. Its pathway is lipid metabolism; malonyl-CoA biosynthesis; malonyl-CoA from acetyl-CoA: step 1/1. Its function is as follows. Component of the acetyl coenzyme A carboxylase (ACC) complex. Biotin carboxylase (BC) catalyzes the carboxylation of biotin on its carrier protein (BCCP) and then the CO(2) group is transferred by the transcarboxylase to acetyl-CoA to form malonyl-CoA. The polypeptide is Acetyl-coenzyme A carboxylase carboxyl transferase subunit beta (Stenotrophomonas maltophilia (strain R551-3)).